A 381-amino-acid polypeptide reads, in one-letter code: CD209 antigen (381 aa).

Topologically, residues 1-37 are cytoplasmic; it reads MSDSKEPSVQQLGLLEEEQLRGLGFRQTRGYKSLAGC. Short sequence motifs (endocytosis signal) lie at residues 14–15, 16–18, and 31–34; these read LL, EEE, and YKSL. Residues 38–58 traverse the membrane as a helical; Signal-anchor for type II membrane protein segment; it reads LGHGXLVLQLLSFTXLAGLLI. At 59 to 381 the chain is on the extracellular side; sequence QVSKFPSSIS…APATPNPPPA (323 aa). Asn-80 carries an N-linked (GlcNAc...) asparagine glycan. A run of 6 repeats spans residues 96–118, 119–141, 142–164, 165–187, 188–210, and 211–234. A 6 X approximate tandem repeats region spans residues 96 to 303; sequence KLQEIYQELT…GLSDVNQEGT (208 aa). 3 disulfides stabilise this stretch: Cys-233-Cys-244, Cys-261-Cys-354, and Cys-333-Cys-346. The region spanning 240 to 355 is the C-type lectin domain; sequence FQGNCYFMSN…CNHAKFWICK (116 aa). Ca(2+)-binding residues include Glu-324, Asn-326, Ile-328, Glu-331, Asn-342, and Asp-343.

In terms of assembly, homotetramer. Interacts with C1QBP; the interaction is indicative for a C1q:C1QBP:CD209 signaling complex. Interacts with ICAM2 and ICAM3 by binding to mannose-like carbohydrates. Interacts (via C-type lectin domain) with CEACAM1 (via Lewis X moieties); this interaction is regulated by the glycosylation pattern of CEACAM1 on cell types and regulates contact between dendritic cells and neutrophils.

It localises to the membrane. Its function is as follows. Pathogen-recognition receptor expressed on the surface of immature dendritic cells (DCs) and involved in initiation of primary immune response. Thought to mediate the endocytosis of pathogens which are subsequently degraded in lysosomal compartments. The receptor returns to the cell membrane surface and the pathogen-derived antigens are presented to resting T-cells via MHC class II proteins to initiate the adaptive immune response. Probably recognizes in a calcium-dependent manner high mannose N-linked oligosaccharides in a variety of pathogen antigens. In terms of biological role, on DCs it is a high affinity receptor for ICAM2 and ICAM3 by binding to mannose-like carbohydrates. May act as a DC rolling receptor that mediates transendothelial migration of DC presursors from blood to tissues by binding endothelial ICAM2. Seems to regulate DC-induced T-cell proliferation by binding to ICAM3 on T-cells in the immunological synapse formed between DC and T-cells. This Symphalangus syndactylus (Siamang) protein is CD209 antigen (CD209).